The primary structure comprises 259 residues: 7alpha-hydroxysteroid dehydrogenase (259 aa).

NAD(+) contacts are provided by residues I18, 37–38 (DY), and N90. Glycochenodeoxycholate is bound by residues S145 and Y158. Residues Y158, K162, and 191 to 193 (ILT) each bind NAD(+). Catalysis depends on Y158, which acts as the Proton acceptor.

This sequence belongs to the short-chain dehydrogenases/reductases (SDR) family. As to quaternary structure, homotetramer.

It catalyses the reaction cholate + NAD(+) = 3alpha,12alpha-dihydroxy-7-oxo-5beta-cholanate + NADH + H(+). The enzyme catalyses chenodeoxycholate + NAD(+) = 7-oxolithocholate + NADH + H(+). The catalysed reaction is taurochenodeoxycholate + NAD(+) = 7-oxotaurolithocholate + NADH + H(+). It carries out the reaction glycochenodeoxycholate + NAD(+) = 7-oxoglycolithocholate + NADH + H(+). It catalyses the reaction taurocholate + NAD(+) = 7-oxo-taurodeoxycholate + NADH + H(+). The enzyme catalyses glycocholate + NAD(+) = 7-oxo-glycodeoxycholate + NADH + H(+). The catalysed reaction is an aromatic primary alcohol + NAD(+) = an aromatic aldehyde + NADH + H(+). It carries out the reaction benzyl alcohol + NAD(+) = benzaldehyde + NADH + H(+). It catalyses the reaction 4-cyanobenzyl alcohol + NAD(+) = 4-cyanobenzaldehyde + NADH + H(+). The enzyme catalyses 4-acetoxybenzyl alcohol + NAD(+) = 4-acetoxybenzaldehyde + NADH + H(+). The catalysed reaction is 4-(trifluoromethyl)benzyl alcohol + NAD(+) = 4-(trifluoromethyl)benzaldehyde + NADH + H(+). Its function is as follows. 7alpha-hydroxysteroid dehydrogenase involved in the metabolism of bile acids in the gut. Catalyzes the NAD(+)-dependent oxidation of the 7alpha-hydroxy group of 7alpha-hydroxysteroids, such as cholate, chenodeoxycholate, taurochenodeoxycholate, glycochenodeoxycholate, taurocholate and glycocholate, to the corresponding 7-oxosteroids. Since it is also able to catalyze the reduction of nonsteroidal carbonyl compounds such as various benzaldehyde analogs to their corresponding benzyl alcohols, this enzyme may also function in the detoxification of xenobiotics containing carbonyl groups in the large intestine. The chain is 7alpha-hydroxysteroid dehydrogenase from Bacteroides fragilis (strain ATCC 25285 / DSM 2151 / CCUG 4856 / JCM 11019 / LMG 10263 / NCTC 9343 / Onslow / VPI 2553 / EN-2).